The sequence spans 428 residues: MSVSVVLGSQWGDEGKGKLVDILAGDIDVCARCAGGNNAGHTIVVPIDGVEKSFAFHLLPSGLVNPKCTGLLGNGVVIHLPSFFAELDALESQGLDCTNRLFISDRAQLVFDFHQIVDGLKEVELGGSSIGTTKKGIGPAYSGKASRSGLRVHHLFEPETFAAKFRKVVEGRFKRYGHFEYDTEGEIERYRKLAERLRPYVVDSVAFIHKALASGKRVLVEGANALMLDIDFGTYPFVTSSSTSIGGVCTGLGIPPKMVGKTIGVVKAYTTRVGAGPFPTEQLNDVGVHLQEVGHEYGTTTGRRRRCGWLDLAVMKHSCLINGYDAFNLTKLDVLDGLDEIKVGVSYSLDGKELSSFPADLELLSRVEVNYVTLPGWKTPITEIRNYDDLPANCKKYINFIEEQLKVPIEWIGVGPGRDAMITKRKDQ.

GTP contacts are provided by residues 12 to 18 (GDEGKGK) and 40 to 42 (GHT). D13 serves as the catalytic Proton acceptor. Mg(2+) contacts are provided by D13 and G40. IMP-binding positions include 13–16 (DEGK), 38–41 (NAGH), T133, R147, N224, T239, and R303. The active-site Proton donor is the H41. 299-305 (TTTGRRR) provides a ligand contact to substrate. Residues R305, 331-333 (KLD), and 413-415 (GVG) contribute to the GTP site.

The protein belongs to the adenylosuccinate synthetase family. Homodimer. The cofactor is Mg(2+).

It localises to the cytoplasm. The catalysed reaction is IMP + L-aspartate + GTP = N(6)-(1,2-dicarboxyethyl)-AMP + GDP + phosphate + 2 H(+). It participates in purine metabolism; AMP biosynthesis via de novo pathway; AMP from IMP: step 1/2. Its function is as follows. Plays an important role in the de novo pathway and in the salvage pathway of purine nucleotide biosynthesis. Catalyzes the first committed step in the biosynthesis of AMP from IMP. The sequence is that of Adenylosuccinate synthetase from Coprinopsis cinerea (strain Okayama-7 / 130 / ATCC MYA-4618 / FGSC 9003) (Inky cap fungus).